The following is a 629-amino-acid chain: Ribosomal protein S6 kinase 2 beta (629 aa).

Positions 62-321 (FVLLKVLGQG…AEELKRHPFF (260 aa)) constitute a Protein kinase 1 domain. ATP-binding positions include 68–76 (LGQGSFGKV) and lysine 94. Residue aspartate 187 is the Proton acceptor of the active site. Serine 221 is modified (phosphoserine). Residues 322 to 391 (STIDWNKLYR…VAPVLVEEDA (70 aa)) form the AGC-kinase C-terminal domain. A Phosphothreonine modification is found at threonine 359. Serine 363 is subject to Phosphoserine. Serine 380 bears the Phosphoserine; by autocatalysis mark. A Protein kinase 2 domain is found at 416–629 (YTVRETIGVG…PEEILARIGS (214 aa)). Residues 422 to 430 (IGVGSYSVC) and lysine 445 contribute to the ATP site. Catalysis depends on aspartate 533, which acts as the Proton acceptor. Threonine 571 bears the Phosphothreonine mark.

It belongs to the protein kinase superfamily. AGC Ser/Thr protein kinase family. S6 kinase subfamily. Mg(2+) serves as cofactor. In terms of processing, autophosphorylated on Ser-380, as part of the activation process.

It catalyses the reaction L-seryl-[protein] + ATP = O-phospho-L-seryl-[protein] + ADP + H(+). The enzyme catalyses L-threonyl-[protein] + ATP = O-phospho-L-threonyl-[protein] + ADP + H(+). Activated by multiple phosphorylations on threonine and serine residues. Functionally, serine/threonine kinase that may play a role in mediating the growth-factor and stress induced activation of transcription. The protein is Ribosomal protein S6 kinase 2 beta of Xenopus laevis (African clawed frog).